The primary structure comprises 934 residues: MYSDFFNSIAFKWQAEWEKSKVFETNMDYSKPKFFITVPFPYTNSPMHVGHGRTYITADIYARYLRMKGYNVLFPFAFQFTGTPVLAIADSIRRGEVDVIEFFKNVYEVPQDKIKELEDPYKLAEYFKEEMKNTAKSIGMSIDWRRTFTTTDPRFEKFIHWQLGKLKELGYLVTEDDVVGYCPNDGFPVGMHDTRGDIEPEITTMNVIMFEGSDSYNFMVATSRPELIFGVVALMVNHDANYVVVEYEGKNFIISEKAYKKLSFQKNMKLVKTITTSDIVKLYAINPITGRKLEIIKNKYVDPSLGTGVVMSYPAHDPFHYLAMTETNKEFEVIPVVETEELDEIPGESAVLQTKNPYALKDFMESIYKTEYYKGYMKDIILSLVPDFLKQYVKENIVGKQVQEARKNTIELLKSLNIYDTIYEISNGPIYCRCGSEIVPKRIKDQWFIAYDNPKWKASALKAINNIELIPNPTKTELEKIVFNARKEPIGRSRGIGVKLPWDESQIVESLSDSTLYTLLYTVIYKMPINIEKEIFDFIFLGKGDAKELERKYGTDLIQLREEFLYWYPVDQRHTGRDLIQNHIPFYIYNHLAIFGEKYLPKRIVINGFVRVGGRKMSKSLRNIYTLSKAIKEFGVDPVRIALTSTSDLLQDLDFNENLVNPIAEQLKKIYDLIDRLLSINTEIKELRTADEWISSKVRDIIEKVNNNITSFKYRDAVNLLLYEIYEILRDYFDLVEIPNQEVIRKILSIWIRALAPFVPHIAEELWHKISSTFVSLEKYPEPNELNLYPDAILEISYINKIIENVRELEDIVHKKAEKVIIYINESEKVKELMKNAIKAVNEEIPLREFTANTEDKIAEKVYVVVSKLDKAIRDYLLNNEIDEEQIIVKNMNFLLRRLGVSEIVIYNAEDPTVPDVKGKKSQALPLSPAIVVE.

The short motif at 41–51 (PYTNSPMHVGH) is the 'HIGH' region element. A 'KMSKS' region motif is present at residues 616–620 (KMSKS). Residue Lys-619 participates in ATP binding.

The protein belongs to the class-I aminoacyl-tRNA synthetase family.

It is found in the cytoplasm. It carries out the reaction tRNA(Leu) + L-leucine + ATP = L-leucyl-tRNA(Leu) + AMP + diphosphate. The polypeptide is Leucine--tRNA ligase 1 (Saccharolobus solfataricus (strain ATCC 35092 / DSM 1617 / JCM 11322 / P2) (Sulfolobus solfataricus)).